The chain runs to 76 residues: Rhesus theta defensin-1/3 subunit A (76 aa).

The first 22 residues, 1–22 (MRTFALLTAMLLLVALHAQAEA), serve as a signal peptide directing secretion. The propeptide occupies 23 to 64 (RQARADEAAAQQQPGTDDQGMAHSFTWPENAALPLSESAKGL). Residues 25-45 (ARADEAAAQQQPGTDDQGMAH) form a disordered region. Arg65 participates in a covalent cross-link: Cyclopeptide (Arg-Cys) (interchain with C-73 in subunit A); in form RTD-3. Arg65 is covalently cross-linked (Cyclopeptide (Arg-Cys) (interchain with C-73 in subunit B); in form RTD-1). The cysteines at positions 68 and 73 are disulfide-linked. Cys73 participates in a covalent cross-link: Cyclopeptide (Cys-Arg) (interchain with R-65 in subunit A); in form RTD-3. Cys73 participates in a covalent cross-link: Cyclopeptide (Cys-Arg) (interchain with R-65 in subunit B); in form RTD-1. The propeptide occupies 74-76 (RLL).

This sequence belongs to the alpha-defensin family. Theta subfamily. As to quaternary structure, RTD-1 is a cyclic heterodimer composed of subunits A and B; disulfide-linked. RTD-3 is a cyclic homodimer composed of two subunits A; disulfide-linked. Post-translationally, forms a cyclic peptide with subunit A (RTD-3) or with subunit B (RTD-1). An additional intersubunit disulfide bond is formed. As to expression, RTD-1 is expressed in bone marrow. Detected in promyelocytes, myelocytes and mature neutrophils and monocytes.

Functionally, RTD-1 and RTD-3 have similar antimicrobial activities against the Gram-positive bacteria S.aureus 502A and L.monocytogenes, the Gram-negative bacteria S.typhimurium and E.coli ML35, and the fungi C.albicans 16820 and C.neoformans 271A. The protein is Rhesus theta defensin-1/3 subunit A (RTD1A) of Macaca mulatta (Rhesus macaque).